We begin with the raw amino-acid sequence, 380 residues long: Spore coat protein B (380 aa).

Residues glycine 224–serine 364 are disordered. Over residues tyrosine 229–serine 248 the composition is skewed to basic and acidic residues. Low complexity-rich tracts occupy residues serine 275 to lysine 288, serine 296 to lysine 315, and serine 338 to serine 356.

The sequence is that of Spore coat protein B (cotB) from Bacillus subtilis (strain 168).